The chain runs to 297 residues: Ribosome production factor 2 homolog (297 aa).

A Brix domain is found at 28 to 232 (KKALFCRGAK…VMRKKLADDA (205 aa)).

It belongs to the RPF2 family.

Its subcellular location is the nucleus. It localises to the nucleolus. This Caenorhabditis elegans protein is Ribosome production factor 2 homolog.